A 605-amino-acid polypeptide reads, in one-letter code: Elongation factor 4 (605 aa).

In terms of domain architecture, tr-type G spans 11 to 193; it reads KNIRNFSIIA…TLVDVIPAPT (183 aa). GTP contacts are provided by residues 23–28 and 140–143; these read DHGKST and NKID.

It belongs to the TRAFAC class translation factor GTPase superfamily. Classic translation factor GTPase family. LepA subfamily.

The protein localises to the cell inner membrane. The catalysed reaction is GTP + H2O = GDP + phosphate + H(+). Its function is as follows. Required for accurate and efficient protein synthesis under certain stress conditions. May act as a fidelity factor of the translation reaction, by catalyzing a one-codon backward translocation of tRNAs on improperly translocated ribosomes. Back-translocation proceeds from a post-translocation (POST) complex to a pre-translocation (PRE) complex, thus giving elongation factor G a second chance to translocate the tRNAs correctly. Binds to ribosomes in a GTP-dependent manner. The protein is Elongation factor 4 of Acinetobacter baumannii (strain AB307-0294).